Here is a 310-residue protein sequence, read N- to C-terminus: tRNA dimethylallyltransferase (310 aa).

Position 12 to 19 (12 to 19) interacts with ATP; that stretch reads GPTATGKT. Residue 14–19 participates in substrate binding; that stretch reads TATGKT. Positions 37 to 40 are interaction with substrate tRNA; it reads DSMM.

This sequence belongs to the IPP transferase family. As to quaternary structure, monomer. Requires Mg(2+) as cofactor.

The enzyme catalyses adenosine(37) in tRNA + dimethylallyl diphosphate = N(6)-dimethylallyladenosine(37) in tRNA + diphosphate. Functionally, catalyzes the transfer of a dimethylallyl group onto the adenine at position 37 in tRNAs that read codons beginning with uridine, leading to the formation of N6-(dimethylallyl)adenosine (i(6)A). This chain is tRNA dimethylallyltransferase, found in Desulforudis audaxviator (strain MP104C).